The following is a 493-amino-acid chain: Accumulates dyads protein 4 (493 aa).

As to quaternary structure, interacts with CNM67, SPO21/MPC70 and NUD1.

It is found in the cytoplasm. The protein resides in the cytoskeleton. Its subcellular location is the microtubule organizing center. The protein localises to the spindle pole body. Functionally, involved in the pathway that organizes the shaping and sizing of the prospore membrane (PSM) during sporulation. May be required to stabilize the outer plaque of the spindle pole body (SPB). In Saccharomyces cerevisiae (strain ATCC 204508 / S288c) (Baker's yeast), this protein is Accumulates dyads protein 4 (ADY4).